The following is a 74-amino-acid chain: Metallothionein-like protein type 2 (74 aa).

Belongs to the metallothionein superfamily. Type 15 family.

Its function is as follows. Metallothioneins have a high content of cysteine residues that bind various heavy metals. This is Metallothionein-like protein type 2 from Nicotiana plumbaginifolia (Leadwort-leaved tobacco).